We begin with the raw amino-acid sequence, 280 residues long: MAAVCFSLSRCCSAVHRPAVTAVRFAQTAAAPAAQPRIKKFQIYRWDPDTVGDKPRMQTYEIDLNTCGPMVLDALIKIKNEMDSTLTFRRSCREGICGSCAMNINGGNTLACLNKIDTNTSKVTKIYPLPHMYVVKDLVPDMSNFYAQYKSIEPYLKKKDESQQGKQQYLQSVEDRQKLDGLYECILCACCSTSCPSYWWNADKYLGPAVLMQAYRWMIDSRDDFTEDRLSKLQDPFSLYRCHTIMNCTRTCPKGLNPGKAIAEIKKMMVTYKQKDAVAA.

A mitochondrion-targeting transit peptide spans methionine 1–phenylalanine 25. In terms of domain architecture, 2Fe-2S ferredoxin-type spans lysine 39–leucine 129. 4 residues coordinate [2Fe-2S] cluster: cysteine 92, cysteine 97, cysteine 100, and cysteine 112. The 31-residue stretch at aspartate 175–tyrosine 205 folds into the 4Fe-4S ferredoxin-type domain. Residues cysteine 185, cysteine 188, and cysteine 191 each coordinate [4Fe-4S] cluster. A [3Fe-4S] cluster-binding site is contributed by cysteine 195. Tryptophan 200 serves as a coordination point for a ubiquinone. Residues cysteine 242 and cysteine 248 each contribute to the [3Fe-4S] cluster site. Position 252 (cysteine 252) interacts with [4Fe-4S] cluster.

The protein belongs to the succinate dehydrogenase/fumarate reductase iron-sulfur protein family. As to quaternary structure, component of complex II composed of four subunits: the flavoprotein (FP) sdha, iron-sulfur protein (IP) sdhb, and a cytochrome b composed of sdhc and sdhd. [2Fe-2S] cluster serves as cofactor. Requires [3Fe-4S] cluster as cofactor. The cofactor is [4Fe-4S] cluster.

It localises to the mitochondrion inner membrane. The enzyme catalyses a quinone + succinate = fumarate + a quinol. It catalyses the reaction (R)-malate + a quinone = enol-oxaloacetate + a quinol. The catalysed reaction is (S)-malate + a quinone = enol-oxaloacetate + a quinol. It participates in carbohydrate metabolism; tricarboxylic acid cycle; fumarate from succinate (eukaryal route): step 1/1. With respect to regulation, enol-oxaloacetate inhibits the succinate dehydrogenase activity. Functionally, iron-sulfur protein (IP) subunit of the succinate dehydrogenase complex (mitochondrial respiratory chain complex II), responsible for transferring electrons from succinate to ubiquinone (coenzyme Q). SDH also oxidizes malate to the non-canonical enol form of oxaloacetate, enol-oxaloacetate. Enol-oxaloacetate, which is a potent inhibitor of the succinate dehydrogenase activity, is further isomerized into keto-oxaloacetate. The sequence is that of Succinate dehydrogenase [ubiquinone] iron-sulfur subunit, mitochondrial (sdhb) from Danio rerio (Zebrafish).